Consider the following 83-residue polypeptide: Kunitz serine protease inhibitor Pr-mulgin 1 (83 aa).

The N-terminal stretch at 1–24 (MSSGGLLLLLGLLTLWEVLTPVSS) is a signal peptide. Positions 31–81 (CELPADPGPCNGLFQAFYYNPVQRKCLKFRYGGCKGNPNTFKTIEECKRTC) constitute a BPTI/Kunitz inhibitor domain. 3 cysteine pairs are disulfide-bonded: cysteine 31–cysteine 81, cysteine 40–cysteine 64, and cysteine 56–cysteine 77.

It belongs to the venom Kunitz-type family. As to expression, expressed by the venom gland.

Its subcellular location is the secreted. Its function is as follows. Specifically inhibits MMP2 activity (EC(50)=100 nM and Ki=60 nM). The polypeptide is Kunitz serine protease inhibitor Pr-mulgin 1 (Pseudechis rossignolii (Papuan pigmy mulga snake)).